The primary structure comprises 162 residues: Probable tRNA (guanine(10)-N2)-dimethyltransferase (162 aa).

The protein belongs to the methyltransferase superfamily. Trm-G10 family. In terms of assembly, monomer.

It localises to the cytoplasm. It catalyses the reaction guanosine(10) in tRNA + 2 S-adenosyl-L-methionine = N(2)-dimethylguanosine(10) in tRNA + 2 S-adenosyl-L-homocysteine + 2 H(+). Catalyzes the adenosylmethionine-dependent methylation of the exocyclic amino group (N(2)) of guanosine at position 10 of various tRNAs. Acts via a two-step process that leads to the formation of either N(2)-monomethyl (m(2)G) or N(2)-dimethylguanosine (m(2)(2)G). The polypeptide is Probable tRNA (guanine(10)-N2)-dimethyltransferase (trmG10) (Methanothermococcus thermolithotrophicus (Methanococcus thermolithotrophicus)).